A 215-amino-acid polypeptide reads, in one-letter code: Meiotic chromosome segregation protein P8B7.28c (215 aa).

Residues 159 to 202 are disordered; that stretch reads TINSEYADDVSDNTDEERTESKGQQESNSAEEYDDDDSDEDRME. Composition is skewed to acidic residues over residues 164–176 and 187–201; these read YADDVSDNTDEER and SAEEYDDDDSDEDRM.

It is found in the nucleus. It localises to the nucleolus. Functionally, required for meiotic chromosome segregation. The chain is Meiotic chromosome segregation protein P8B7.28c from Schizosaccharomyces pombe (strain 972 / ATCC 24843) (Fission yeast).